The sequence spans 265 residues: Zinc transporter ZupT (265 aa).

Helical transmembrane passes span isoleucine 6–leucine 26, phenylalanine 37–isoleucine 57, tryptophan 77–valine 97, glycine 122–leucine 142, isoleucine 150–alanine 170, phenylalanine 184–leucine 204, phenylalanine 208–isoleucine 228, and cysteine 245–isoleucine 265. The Fe(2+) site is built by asparagine 133 and glutamate 136. Positions 136 and 161 each coordinate Zn(2+). Residues asparagine 162, glutamate 165, and glutamate 194 each contribute to the Fe(2+) site. Glutamate 165 is a Zn(2+) binding site.

Belongs to the ZIP transporter (TC 2.A.5) family. ZupT subfamily.

It localises to the cell membrane. It catalyses the reaction Zn(2+)(in) = Zn(2+)(out). In terms of biological role, mediates zinc uptake. May also transport other divalent cations. The chain is Zinc transporter ZupT from Corynebacterium aurimucosum (strain ATCC 700975 / DSM 44827 / CIP 107346 / CN-1) (Corynebacterium nigricans).